Consider the following 235-residue polypeptide: Ribonuclease 3 (235 aa).

The region spanning 6–131 (IDQLEKLTGH…LIAVIYLDGG (126 aa)) is the RNase III domain. Residue E44 coordinates Mg(2+). D48 is a catalytic residue. Mg(2+) contacts are provided by D117 and E120. Residue E120 is part of the active site. Residues 156-225 (DAKTQLQEWA…AEKILRREGI (70 aa)) enclose the DRBM domain.

This sequence belongs to the ribonuclease III family. In terms of assembly, homodimer. The cofactor is Mg(2+).

The protein localises to the cytoplasm. It carries out the reaction Endonucleolytic cleavage to 5'-phosphomonoester.. In terms of biological role, digests double-stranded RNA. Involved in the processing of primary rRNA transcript to yield the immediate precursors to the large and small rRNAs (23S and 16S). Processes some mRNAs, and tRNAs when they are encoded in the rRNA operon. Processes pre-crRNA and tracrRNA of type II CRISPR loci if present in the organism. This chain is Ribonuclease 3, found in Bartonella henselae (strain ATCC 49882 / DSM 28221 / CCUG 30454 / Houston 1) (Rochalimaea henselae).